The primary structure comprises 330 residues: Tetraacyldisaccharide 4'-kinase (330 aa).

58–65 (TVGGSGKT) is a binding site for ATP.

Belongs to the LpxK family.

It catalyses the reaction a lipid A disaccharide + ATP = a lipid IVA + ADP + H(+). It functions in the pathway glycolipid biosynthesis; lipid IV(A) biosynthesis; lipid IV(A) from (3R)-3-hydroxytetradecanoyl-[acyl-carrier-protein] and UDP-N-acetyl-alpha-D-glucosamine: step 6/6. Functionally, transfers the gamma-phosphate of ATP to the 4'-position of a tetraacyldisaccharide 1-phosphate intermediate (termed DS-1-P) to form tetraacyldisaccharide 1,4'-bis-phosphate (lipid IVA). The chain is Tetraacyldisaccharide 4'-kinase from Shewanella pealeana (strain ATCC 700345 / ANG-SQ1).